Consider the following 448-residue polypeptide: Signal recognition particle 54 kDa protein (448 aa).

Residues 107 to 114 (GIQGSGKT), 189 to 193 (DTAGR), and 247 to 250 (TKLD) contribute to the GTP site.

The protein belongs to the GTP-binding SRP family. SRP54 subfamily. As to quaternary structure, part of the signal recognition particle protein translocation system, which is composed of SRP and FtsY. Archaeal SRP consists of a 7S RNA molecule of 300 nucleotides and two protein subunits: SRP54 and SRP19.

It is found in the cytoplasm. The enzyme catalyses GTP + H2O = GDP + phosphate + H(+). Involved in targeting and insertion of nascent membrane proteins into the cytoplasmic membrane. Binds to the hydrophobic signal sequence of the ribosome-nascent chain (RNC) as it emerges from the ribosomes. The SRP-RNC complex is then targeted to the cytoplasmic membrane where it interacts with the SRP receptor FtsY. The protein is Signal recognition particle 54 kDa protein of Thermococcus gammatolerans (strain DSM 15229 / JCM 11827 / EJ3).